Reading from the N-terminus, the 1026-residue chain is Lon protease homolog, mitochondrial (1026 aa).

A mitochondrion-targeting transit peptide spans Met1–Tyr29. Disordered regions lie at residues Tyr29–Leu55 and Ala185–Ser206. The region spanning Met62–Leu345 is the Lon N-terminal domain. Over residues Ala185–Thr194 the composition is skewed to acidic residues. Positions Val195–Ser206 are enriched in basic and acidic residues. Gly497–Thr504 provides a ligand contact to ATP. Residues Thr711–Val785 form a disordered region. Residues Leu714–Asp737 are compositionally biased toward polar residues. In terms of domain architecture, Lon proteolytic spans Thr815–Gly1001. Active-site residues include Ser907 and Lys950.

The protein belongs to the peptidase S16 family. Homohexamer or homoheptamer. Organized in a ring with a central cavity.

Its subcellular location is the mitochondrion matrix. It catalyses the reaction Hydrolysis of proteins in presence of ATP.. Functionally, ATP-dependent serine protease that mediates the selective degradation of misfolded, unassembled or oxidatively damaged polypeptides as well as certain short-lived regulatory proteins in the mitochondrial matrix. May also have a chaperone function in the assembly of inner membrane protein complexes. Participates in the regulation of mitochondrial gene expression and in the maintenance of the integrity of the mitochondrial genome. Binds to mitochondrial DNA in a site-specific manner. This is Lon protease homolog, mitochondrial from Candida glabrata (strain ATCC 2001 / BCRC 20586 / JCM 3761 / NBRC 0622 / NRRL Y-65 / CBS 138) (Yeast).